Reading from the N-terminus, the 244-residue chain is tRNA (guanine-N(1)-)-methyltransferase (244 aa).

Residues glycine 110 and 129-134 (IGDYIL) contribute to the S-adenosyl-L-methionine site.

The protein belongs to the RNA methyltransferase TrmD family. In terms of assembly, homodimer.

The protein resides in the cytoplasm. It carries out the reaction guanosine(37) in tRNA + S-adenosyl-L-methionine = N(1)-methylguanosine(37) in tRNA + S-adenosyl-L-homocysteine + H(+). In terms of biological role, specifically methylates guanosine-37 in various tRNAs. The protein is tRNA (guanine-N(1)-)-methyltransferase of Syntrophomonas wolfei subsp. wolfei (strain DSM 2245B / Goettingen).